The sequence spans 349 residues: Protein RecA (349 aa).

69 to 76 (GPESSGKT) contacts ATP.

This sequence belongs to the RecA family.

The protein resides in the cytoplasm. Can catalyze the hydrolysis of ATP in the presence of single-stranded DNA, the ATP-dependent uptake of single-stranded DNA by duplex DNA, and the ATP-dependent hybridization of homologous single-stranded DNAs. It interacts with LexA causing its activation and leading to its autocatalytic cleavage. This chain is Protein RecA, found in Rippkaea orientalis (strain PCC 8801 / RF-1) (Cyanothece sp. (strain PCC 8801)).